The following is a 120-amino-acid chain: NAD(P)H-quinone oxidoreductase subunit 3, chloroplastic (120 aa).

3 consecutive transmembrane segments (helical) span residues 9 to 29 (IFWA…IISG), 60 to 80 (ICYY…VFLY), and 88 to 108 (ILGV…IVGS).

The protein belongs to the complex I subunit 3 family. NDH is composed of at least 16 different subunits, 5 of which are encoded in the nucleus.

Its subcellular location is the plastid. The protein resides in the chloroplast thylakoid membrane. It catalyses the reaction a plastoquinone + NADH + (n+1) H(+)(in) = a plastoquinol + NAD(+) + n H(+)(out). The enzyme catalyses a plastoquinone + NADPH + (n+1) H(+)(in) = a plastoquinol + NADP(+) + n H(+)(out). In terms of biological role, NDH shuttles electrons from NAD(P)H:plastoquinone, via FMN and iron-sulfur (Fe-S) centers, to quinones in the photosynthetic chain and possibly in a chloroplast respiratory chain. The immediate electron acceptor for the enzyme in this species is believed to be plastoquinone. Couples the redox reaction to proton translocation, and thus conserves the redox energy in a proton gradient. This Morus indica (Mulberry) protein is NAD(P)H-quinone oxidoreductase subunit 3, chloroplastic.